We begin with the raw amino-acid sequence, 614 residues long: Dihydroxy-acid dehydratase (614 aa).

Asp81 provides a ligand contact to Mg(2+). Cys122 is a binding site for [2Fe-2S] cluster. Residues Asp123 and Lys124 each coordinate Mg(2+). Lys124 carries the N6-carboxylysine modification. [2Fe-2S] cluster is bound at residue Cys193. Glu489 serves as a coordination point for Mg(2+). The Proton acceptor role is filled by Ser515.

It belongs to the IlvD/Edd family. Homodimer. Requires [2Fe-2S] cluster as cofactor. The cofactor is Mg(2+).

The enzyme catalyses (2R)-2,3-dihydroxy-3-methylbutanoate = 3-methyl-2-oxobutanoate + H2O. It catalyses the reaction (2R,3R)-2,3-dihydroxy-3-methylpentanoate = (S)-3-methyl-2-oxopentanoate + H2O. It participates in amino-acid biosynthesis; L-isoleucine biosynthesis; L-isoleucine from 2-oxobutanoate: step 3/4. It functions in the pathway amino-acid biosynthesis; L-valine biosynthesis; L-valine from pyruvate: step 3/4. In terms of biological role, functions in the biosynthesis of branched-chain amino acids. Catalyzes the dehydration of (2R,3R)-2,3-dihydroxy-3-methylpentanoate (2,3-dihydroxy-3-methylvalerate) into 2-oxo-3-methylpentanoate (2-oxo-3-methylvalerate) and of (2R)-2,3-dihydroxy-3-methylbutanoate (2,3-dihydroxyisovalerate) into 2-oxo-3-methylbutanoate (2-oxoisovalerate), the penultimate precursor to L-isoleucine and L-valine, respectively. This is Dihydroxy-acid dehydratase from Hahella chejuensis (strain KCTC 2396).